The primary structure comprises 343 residues: Mitochondrial import inner membrane translocase subunit TIM50-A (343 aa).

Residues 1-57 (MHKIVWFGTLNKSIGYIGKKKTCLLSPCEKICLNSARKTVQRCDKNYSPPKLRRIKN) are Mitochondrial matrix-facing. Residues 58–77 (FYTYSVVLGSLFSIVMWAIY) form a helical membrane-spanning segment. Residues 78–343 (KLGKPEEDHR…GRSLRGSSIK (266 aa)) are Mitochondrial intermembrane-facing. The FCP1 homology domain occupies 135–278 (YIQPPYSLVL…FDLTAFLQLI (144 aa)).

Belongs to the TIM50 family. As to quaternary structure, component of the TIM23 complex at least composed of Tim23, Tim17 (Tim17a1, Tim17a2 or Tim17b1) and a Tim50. As to expression, exclusively expressed in the testis.

It is found in the mitochondrion inner membrane. Its function is as follows. Essential component of the TIM23 complex, a complex that mediates the translocation of transit peptide-containing proteins across the mitochondrial inner membrane. This chain is Mitochondrial import inner membrane translocase subunit TIM50-A (ttm3), found in Drosophila melanogaster (Fruit fly).